Here is a 249-residue protein sequence, read N- to C-terminus: MSEAAETLDGWYSLHLFYAVDWATFRLVPEDEREAMINEFKTFINDKASAREQQAGDYALYNITGQKADILLWYLRPEMKELNEIENELNKLRIADFFIQTYSYVSVIELGNYLAGKSDEDPYQNPHVRARLYPELPRTEYICFYPMDKRRNETYNWYMLPMEERKKLMYNHGMIGRQYAGKIKQFITGSVGFDDFEWGVTLFSDDVLQFKKIVYEMRFDETTARYGEFGGFYIGHILKTDDFEHFFAI.

Residues Arg-131, Tyr-145–Lys-149, His-172, and Gln-185 contribute to the Fe-coproporphyrin III site. Residue Tyr-145 is part of the active site.

Belongs to the ChdC family. Type 1 subfamily. It depends on Fe-coproporphyrin III as a cofactor.

The catalysed reaction is Fe-coproporphyrin III + 2 H2O2 + 2 H(+) = heme b + 2 CO2 + 4 H2O. The enzyme catalyses Fe-coproporphyrin III + H2O2 + H(+) = harderoheme III + CO2 + 2 H2O. It catalyses the reaction harderoheme III + H2O2 + H(+) = heme b + CO2 + 2 H2O. Its pathway is porphyrin-containing compound metabolism; protoheme biosynthesis. Involved in coproporphyrin-dependent heme b biosynthesis. Catalyzes the decarboxylation of Fe-coproporphyrin III (coproheme) to heme b (protoheme IX), the last step of the pathway. The reaction occurs in a stepwise manner with a three-propionate intermediate. The sequence is that of Coproheme decarboxylase from Staphylococcus haemolyticus (strain JCSC1435).